The primary structure comprises 184 residues: uncharacterized protein (184 aa).

Positions 146 to 177 (HPKTSLAQQPNAKATQPPLSKETLNTAKETDP) are disordered. Over residues 150 to 172 (SLAQQPNAKATQPPLSKETLNTA) the composition is skewed to polar residues.

This is an uncharacterized protein from Picosynechococcus sp. (strain ATCC 27264 / PCC 7002 / PR-6) (Agmenellum quadruplicatum).